Reading from the N-terminus, the 156-residue chain is Small ribosomal subunit protein uS7 (156 aa).

The protein belongs to the universal ribosomal protein uS7 family. Part of the 30S ribosomal subunit. Contacts proteins S9 and S11.

One of the primary rRNA binding proteins, it binds directly to 16S rRNA where it nucleates assembly of the head domain of the 30S subunit. Is located at the subunit interface close to the decoding center, probably blocks exit of the E-site tRNA. This chain is Small ribosomal subunit protein uS7, found in Bartonella henselae (strain ATCC 49882 / DSM 28221 / CCUG 30454 / Houston 1) (Rochalimaea henselae).